The chain runs to 314 residues: Olfactory receptor 10A3 (314 aa).

At 1–25 the chain is on the extracellular side; the sequence is MKRQNQSCVVEFILLGFSNFPELQV. N-linked (GlcNAc...) asparagine glycosylation occurs at Asn-5. The chain crosses the membrane as a helical span at residues 26–46; that stretch reads QLFGVFLVIYVVTLMGNAIIT. Residues 47–54 are Cytoplasmic-facing; that stretch reads VIISLNQS. The chain crosses the membrane as a helical span at residues 55 to 75; sequence LHVPMYLFLLNLSVVEVSFSA. The Extracellular portion of the chain corresponds to 76-99; the sequence is VITPEMLVVLSTEKTMISFVGCFA. A disulfide bond links Cys-97 and Cys-189. Residues 100–120 traverse the membrane as a helical segment; it reads QMYFILLFGGTECFLLGAMAY. The Cytoplasmic segment spans residues 121 to 139; it reads DRFAAICHPLNYPVIMNRG. The chain crosses the membrane as a helical span at residues 140 to 160; the sequence is VFMKLVIFSWISGIMVATVQT. Over 161 to 197 the chain is Extracellular; it reads TWVFSFPFCGPNEINHLFCETPPVLELVCADTFLFEI. Residues 198 to 217 traverse the membrane as a helical segment; that stretch reads YAFTGTILIVMVPFLLILLS. The Cytoplasmic segment spans residues 218–237; it reads YIRVLFAILKMPSTTGRQKA. A helical transmembrane segment spans residues 238–258; sequence FSTCASHLTSVTLFYGTANMT. Residues 259 to 271 lie on the Extracellular side of the membrane; it reads YLQPKSGYSPETK. A helical transmembrane segment spans residues 272–292; the sequence is KLISLAYTLLTPLLNPLIYSL. The Cytoplasmic portion of the chain corresponds to 293 to 314; sequence RNSEMKRTLIKLWRRKVILHTF.

The protein belongs to the G-protein coupled receptor 1 family.

Its subcellular location is the cell membrane. Odorant receptor. The sequence is that of Olfactory receptor 10A3 (OR10A3) from Homo sapiens (Human).